Here is a 218-residue protein sequence, read N- to C-terminus: Octanoyltransferase (218 aa).

Residues glutamate 30–alanine 212 form the BPL/LPL catalytic domain. Residues arginine 69–histidine 76, serine 141–glycine 143, and glycine 154–alanine 156 contribute to the substrate site. The active-site Acyl-thioester intermediate is cysteine 172.

The protein belongs to the LipB family.

Its subcellular location is the cytoplasm. It catalyses the reaction octanoyl-[ACP] + L-lysyl-[protein] = N(6)-octanoyl-L-lysyl-[protein] + holo-[ACP] + H(+). It participates in protein modification; protein lipoylation via endogenous pathway; protein N(6)-(lipoyl)lysine from octanoyl-[acyl-carrier-protein]: step 1/2. In terms of biological role, catalyzes the transfer of endogenously produced octanoic acid from octanoyl-acyl-carrier-protein onto the lipoyl domains of lipoate-dependent enzymes. Lipoyl-ACP can also act as a substrate although octanoyl-ACP is likely to be the physiological substrate. This Actinobacillus pleuropneumoniae serotype 5b (strain L20) protein is Octanoyltransferase.